The primary structure comprises 276 residues: tRNA (guanine-N(7)-)-methyltransferase (276 aa).

Residues 1–23 (MRPDPAPLDPTDASPAQARRHQP) are disordered. S-adenosyl-L-methionine-binding residues include glutamate 103, glutamate 128, aspartate 155, and aspartate 178. The active site involves aspartate 178. Substrate contacts are provided by residues lysine 182, aspartate 214, and 252-255 (TRYE).

It belongs to the class I-like SAM-binding methyltransferase superfamily. TrmB family.

It carries out the reaction guanosine(46) in tRNA + S-adenosyl-L-methionine = N(7)-methylguanosine(46) in tRNA + S-adenosyl-L-homocysteine. The protein operates within tRNA modification; N(7)-methylguanine-tRNA biosynthesis. In terms of biological role, catalyzes the formation of N(7)-methylguanine at position 46 (m7G46) in tRNA. This chain is tRNA (guanine-N(7)-)-methyltransferase, found in Cutibacterium acnes (strain DSM 16379 / KPA171202) (Propionibacterium acnes).